The sequence spans 208 residues: MVFDELITEFDRGLRSIAGVSRMSRPVPKPAAAAPAELSAAERKHAAGLMRVNHVGEVCAQALYQAQKLTTSSAGLKEMFEHAAREEEDHLAWTAHRLKDLDSRPSLLNPLWYAGALAIGVVAGRLGDKMSLGFMAETERQVESHLDGHLSELPAADVESRAIVEQMRADEVKHGKSATDAGGIELPMPARMLMRAASKVMTSTAYYL.

6 residues coordinate Fe cation: Glu57, Glu87, His90, Glu139, Glu171, and His174.

It belongs to the COQ7 family. Fe cation is required as a cofactor.

It is found in the cell membrane. The enzyme catalyses a 5-methoxy-2-methyl-3-(all-trans-polyprenyl)benzene-1,4-diol + AH2 + O2 = a 3-demethylubiquinol + A + H2O. The protein operates within cofactor biosynthesis; ubiquinone biosynthesis. Its function is as follows. Catalyzes the hydroxylation of 2-nonaprenyl-3-methyl-6-methoxy-1,4-benzoquinol during ubiquinone biosynthesis. The sequence is that of 3-demethoxyubiquinol 3-hydroxylase from Burkholderia pseudomallei (strain 1106a).